The following is a 505-amino-acid chain: ATP synthase subunit alpha (505 aa).

Position 170 to 177 (170 to 177 (GDRQTGKT)) interacts with ATP.

Belongs to the ATPase alpha/beta chains family. As to quaternary structure, F-type ATPases have 2 components, CF(1) - the catalytic core - and CF(0) - the membrane proton channel. CF(1) has five subunits: alpha(3), beta(3), gamma(1), delta(1), epsilon(1). CF(0) has four main subunits: a(1), b(1), b'(1) and c(9-12).

Its subcellular location is the cellular thylakoid membrane. It carries out the reaction ATP + H2O + 4 H(+)(in) = ADP + phosphate + 5 H(+)(out). Its function is as follows. Produces ATP from ADP in the presence of a proton gradient across the membrane. The alpha chain is a regulatory subunit. The polypeptide is ATP synthase subunit alpha (Prochlorococcus marinus (strain SARG / CCMP1375 / SS120)).